We begin with the raw amino-acid sequence, 938 residues long: Protein translocase subunit SecA (938 aa).

Residues Q90, 108 to 112, and D504 contribute to the ATP site; that span reads GEGKT.

The protein belongs to the SecA family. In terms of assembly, monomer and homodimer. Part of the essential Sec protein translocation apparatus which comprises SecA, SecYEG and auxiliary proteins SecDF. Other proteins may also be involved.

It is found in the cell inner membrane. Its subcellular location is the cellular thylakoid membrane. The protein localises to the cytoplasm. It catalyses the reaction ATP + H2O + cellular proteinSide 1 = ADP + phosphate + cellular proteinSide 2.. Functionally, part of the Sec protein translocase complex. Interacts with the SecYEG preprotein conducting channel. Has a central role in coupling the hydrolysis of ATP to the transfer of proteins into and across the cell membrane, serving as an ATP-driven molecular motor driving the stepwise translocation of polypeptide chains across the membrane. Its function is as follows. Probably participates in protein translocation into and across both the cytoplasmic and thylakoid membranes in cyanobacterial cells. This chain is Protein translocase subunit SecA, found in Microcystis aeruginosa (strain NIES-843 / IAM M-2473).